A 954-amino-acid chain; its full sequence is Endogenous retrovirus group K member 25 Pol protein (954 aa).

One can recognise a Reverse transcriptase domain in the interval 57 to 245 (LEKGHIEPSF…TPFHYLGMQI (189 aa)). The short motif at 161–164 (LPQG) is the LPQG element. The short motif at 195 to 198 (YIDD) is the YXDD element. The 129-residue stretch at 460–588 (LENALTVFTD…ADLLVSSALI (129 aa)) folds into the RNase H type-1 domain. Positions 469, 497, 515, and 580 each coordinate Mg(2+). The Integrase-type zinc finger occupies 585 to 626 (SALIKAQELHALTHVNAAGLKNKFDVTWKLAKDIVQHCTQCQ). Zn(2+) contacts are provided by His-594, His-598, Cys-622, and Cys-625. Residues 640–801 (RGLCPNALWQ…TSAEQHLTGK (162 aa)) enclose the Integrase catalytic domain. A DNA-binding region (integrase-type) is located at residues 809 to 857 (KLIWWKDNKNKTWEIGKVITWGRGFACVSPGENQLPVWIPTRHLKFYNE). Residues 862–888 (AKKSTSAETETPQSSTVDSQDEQNGDV) form a disordered region. A compositionally biased stretch (polar residues) spans 867-879 (SAETETPQSSTVD).

The protein belongs to the beta type-B retroviral polymerase family. HERV class-II K(HML-2) pol subfamily.

It carries out the reaction DNA(n) + a 2'-deoxyribonucleoside 5'-triphosphate = DNA(n+1) + diphosphate. It catalyses the reaction Endonucleolytic cleavage to 5'-phosphomonoester.. Functionally, early post-infection, the reverse transcriptase converts the viral RNA genome into double-stranded viral DNA. The RNase H domain of the reverse transcriptase performs two functions. It degrades the RNA template and specifically removes the RNA primer from the RNA/DNA hybrid. Following nuclear import, the integrase catalyzes the insertion of the linear, double-stranded viral DNA into the host cell chromosome. Endogenous Pol proteins may have kept, lost or modified their original function during evolution. The sequence is that of Endogenous retrovirus group K member 25 Pol protein (ERVK-25) from Homo sapiens (Human).